The following is a 238-amino-acid chain: Ribosomal RNA small subunit methyltransferase G (238 aa).

Residues G75, L80, 126–127 (AE), and R142 contribute to the S-adenosyl-L-methionine site.

Belongs to the methyltransferase superfamily. RNA methyltransferase RsmG family.

Its subcellular location is the cytoplasm. Functionally, specifically methylates the N7 position of guanine in position 518 of 16S rRNA. This Streptomyces avermitilis (strain ATCC 31267 / DSM 46492 / JCM 5070 / NBRC 14893 / NCIMB 12804 / NRRL 8165 / MA-4680) protein is Ribosomal RNA small subunit methyltransferase G.